A 453-amino-acid polypeptide reads, in one-letter code: Ribosomal protein uS12 methylthiotransferase RimO (453 aa).

The 116-residue stretch at 3–118 folds into the MTTase N-terminal domain; it reads KKVGIISLGC…IAKVIEEFYS (116 aa). The [4Fe-4S] cluster site is built by Cys-12, Cys-48, Cys-81, Cys-162, Cys-166, and Cys-169. Residues 148-378 enclose the Radical SAM core domain; the sequence is STNSGYAYLK…MQLQKEIVQR (231 aa). A TRAM domain is found at 381–449; it reads ESRLEKVYKT…DYDLIGEVIN (69 aa).

The protein belongs to the methylthiotransferase family. RimO subfamily. The cofactor is [4Fe-4S] cluster.

The protein localises to the cytoplasm. It catalyses the reaction L-aspartate(89)-[ribosomal protein uS12]-hydrogen + (sulfur carrier)-SH + AH2 + 2 S-adenosyl-L-methionine = 3-methylsulfanyl-L-aspartate(89)-[ribosomal protein uS12]-hydrogen + (sulfur carrier)-H + 5'-deoxyadenosine + L-methionine + A + S-adenosyl-L-homocysteine + 2 H(+). Functionally, catalyzes the methylthiolation of an aspartic acid residue of ribosomal protein uS12. This chain is Ribosomal protein uS12 methylthiotransferase RimO, found in Acetivibrio thermocellus (strain ATCC 27405 / DSM 1237 / JCM 9322 / NBRC 103400 / NCIMB 10682 / NRRL B-4536 / VPI 7372) (Clostridium thermocellum).